The sequence spans 299 residues: N-acetylmuramic acid 6-phosphate etherase (299 aa).

The 164-residue stretch at 57–220 (ISAAFHKKGR…TTGAMIRTGK (164 aa)) folds into the SIS domain. E85 (proton donor) is an active-site residue. Residue E116 is part of the active site.

Belongs to the GCKR-like family. MurNAc-6-P etherase subfamily. As to quaternary structure, homodimer.

It catalyses the reaction N-acetyl-D-muramate 6-phosphate + H2O = N-acetyl-D-glucosamine 6-phosphate + (R)-lactate. It participates in amino-sugar metabolism; 1,6-anhydro-N-acetylmuramate degradation. Its pathway is amino-sugar metabolism; N-acetylmuramate degradation. It functions in the pathway cell wall biogenesis; peptidoglycan recycling. In terms of biological role, specifically catalyzes the cleavage of the D-lactyl ether substituent of MurNAc 6-phosphate, producing GlcNAc 6-phosphate and D-lactate. Together with AnmK, is also required for the utilization of anhydro-N-acetylmuramic acid (anhMurNAc) either imported from the medium or derived from its own cell wall murein, and thus plays a role in cell wall recycling. This Psychromonas ingrahamii (strain DSM 17664 / CCUG 51855 / 37) protein is N-acetylmuramic acid 6-phosphate etherase.